A 95-amino-acid polypeptide reads, in one-letter code: Aspartyl/glutamyl-tRNA(Asn/Gln) amidotransferase subunit C (95 aa).

It belongs to the GatC family. As to quaternary structure, heterotrimer of A, B and C subunits.

The enzyme catalyses L-glutamyl-tRNA(Gln) + L-glutamine + ATP + H2O = L-glutaminyl-tRNA(Gln) + L-glutamate + ADP + phosphate + H(+). It carries out the reaction L-aspartyl-tRNA(Asn) + L-glutamine + ATP + H2O = L-asparaginyl-tRNA(Asn) + L-glutamate + ADP + phosphate + 2 H(+). Functionally, allows the formation of correctly charged Asn-tRNA(Asn) or Gln-tRNA(Gln) through the transamidation of misacylated Asp-tRNA(Asn) or Glu-tRNA(Gln) in organisms which lack either or both of asparaginyl-tRNA or glutaminyl-tRNA synthetases. The reaction takes place in the presence of glutamine and ATP through an activated phospho-Asp-tRNA(Asn) or phospho-Glu-tRNA(Gln). In Pseudomonas paraeruginosa (strain DSM 24068 / PA7) (Pseudomonas aeruginosa (strain PA7)), this protein is Aspartyl/glutamyl-tRNA(Asn/Gln) amidotransferase subunit C.